A 69-amino-acid polypeptide reads, in one-letter code: Large ribosomal subunit protein uL29 (69 aa).

Belongs to the universal ribosomal protein uL29 family.

The protein is Large ribosomal subunit protein uL29 of Parasynechococcus marenigrum (strain WH8102).